The primary structure comprises 165 residues: Cyclic pyranopterin monophosphate synthase (165 aa).

Substrate is bound by residues 78–80 and 116–117; these read LCH and ME. Aspartate 131 is an active-site residue.

It belongs to the MoaC family. In terms of assembly, homohexamer; trimer of dimers.

It carries out the reaction (8S)-3',8-cyclo-7,8-dihydroguanosine 5'-triphosphate = cyclic pyranopterin phosphate + diphosphate. Its pathway is cofactor biosynthesis; molybdopterin biosynthesis. Catalyzes the conversion of (8S)-3',8-cyclo-7,8-dihydroguanosine 5'-triphosphate to cyclic pyranopterin monophosphate (cPMP). This is Cyclic pyranopterin monophosphate synthase from Sinorhizobium fredii (strain NBRC 101917 / NGR234).